A 473-amino-acid polypeptide reads, in one-letter code: PPE family protein PPE37 (473 aa).

The short motif at 203 to 206 (DFLE) is the Iron-binding motif element. The next 2 membrane-spanning stretches (helical) occupy residues 227 to 247 (VLDW…AYLV) and 250 to 270 (PLIY…PAGL).

This sequence belongs to the mycobacterial PPE family.

It is found in the cell membrane. Functionally, essential for efficient heme-iron acquisition (HIA). Binds iron. Strains with a functional PPE37 can utilize low concentrations of hemin very efficiently in broth and on agar plates. During infection, might interfere with the pro-inflammatory cytokine response in infected macrophages. In vitro, incubation of the protein in the presence of M.tuberculosis proteases leads to the cleavage of PPE37 into two segments, the N- and C-terminal segments. Transfection of human monocytic THP-1 cell lines with the N-terminal segment leads to the proliferation and differentiation of THP-1 cells into adherent stellate cells with dendritic cell-like morphology. Transfection of THP-1 cells with the C-terminal segment leads to the apoptosis of the cells. Recombinant protein antigens display strong B-cell response in tuberculosis patients and immunized mice. The polypeptide is PPE family protein PPE37 (Mycobacterium tuberculosis (strain ATCC 25618 / H37Rv)).